A 654-amino-acid chain; its full sequence is Heat shock 70 kDa protein 2 (654 aa).

Positions 612–646 (AGGEGGAPGAGFPGAGGPGGFPGAGAGGAHSGGDD) are enriched in gly residues. Residues 612–654 (AGGEGGAPGAGFPGAGGPGGFPGAGAGGAHSGGDDGPTVEEVD) form a disordered region.

This sequence belongs to the heat shock protein 70 family.

This chain is Heat shock 70 kDa protein 2 (HSP70-2), found in Paracoccidioides lutzii (strain ATCC MYA-826 / Pb01) (Paracoccidioides brasiliensis).